The following is a 149-amino-acid chain: Calmodulin (149 aa).

Position 2 is an N-acetylalanine (alanine 2). 4 consecutive EF-hand domains span residues 8-43 (EQIA…LGQN), 44-79 (PTEA…KMKD), 81-116 (DSEE…LGEK), and 117-149 (LSED…MMSK). Ca(2+) is bound by residues aspartate 21, aspartate 23, aspartate 25, threonine 27, glutamate 32, aspartate 57, aspartate 59, asparagine 61, threonine 63, glutamate 68, aspartate 94, aspartate 96, asparagine 98, tyrosine 100, glutamate 105, aspartate 130, aspartate 132, aspartate 134, glutamine 136, and glutamate 141.

This sequence belongs to the calmodulin family.

Functionally, calmodulin mediates the control of a large number of enzymes, ion channels and other proteins by Ca(2+). Among the enzymes to be stimulated by the calmodulin-Ca(2+) complex are a number of protein kinases and phosphatases. In Blastocladiella emersonii (Aquatic fungus), this protein is Calmodulin (CMD1).